The following is a 264-amino-acid chain: Type III pantothenate kinase (264 aa).

6-13 is a binding site for ATP; that stretch reads DVRNTSIE. Substrate is bound at residue 109 to 112; the sequence is GADR. The active-site Proton acceptor is the aspartate 111. Aspartate 131 provides a ligand contact to K(+). Threonine 134 is an ATP binding site. Position 185 (threonine 185) interacts with substrate.

This sequence belongs to the type III pantothenate kinase family. As to quaternary structure, homodimer. The cofactor is NH4(+). It depends on K(+) as a cofactor.

The protein localises to the cytoplasm. It carries out the reaction (R)-pantothenate + ATP = (R)-4'-phosphopantothenate + ADP + H(+). It functions in the pathway cofactor biosynthesis; coenzyme A biosynthesis; CoA from (R)-pantothenate: step 1/5. In terms of biological role, catalyzes the phosphorylation of pantothenate (Pan), the first step in CoA biosynthesis. The polypeptide is Type III pantothenate kinase (Nocardia farcinica (strain IFM 10152)).